Here is a 38-residue protein sequence, read N- to C-terminus: Potassium channel toxin alpha-KTx 2.21 (38 aa).

3 disulfides stabilise this stretch: C7-C29, C13-C34, and C17-C36.

As to expression, expressed by the venom gland.

It localises to the secreted. Functionally, inhibits human voltage-gated potassium (Kv) channels Kv1.2/KCNA2 and Kv1.3/KCNA3. Does not block human Kv1.1/KCNA1 at 100nM concentration. The sequence is that of Potassium channel toxin alpha-KTx 2.21 from Centruroides bonito (Scorpion).